A 275-amino-acid polypeptide reads, in one-letter code: NH(3)-dependent NAD(+) synthetase (275 aa).

46 to 53 (GISGGQDS) serves as a coordination point for ATP. Aspartate 52 serves as a coordination point for Mg(2+). Deamido-NAD(+) is bound at residue arginine 140. An ATP-binding site is contributed by threonine 160. Glutamate 165 contributes to the Mg(2+) binding site. 2 residues coordinate deamido-NAD(+): lysine 173 and aspartate 180. 2 residues coordinate ATP: lysine 189 and threonine 211. 260 to 261 (HK) lines the deamido-NAD(+) pocket.

This sequence belongs to the NAD synthetase family. As to quaternary structure, homodimer.

The enzyme catalyses deamido-NAD(+) + NH4(+) + ATP = AMP + diphosphate + NAD(+) + H(+). Its pathway is cofactor biosynthesis; NAD(+) biosynthesis; NAD(+) from deamido-NAD(+) (ammonia route): step 1/1. Catalyzes the ATP-dependent amidation of deamido-NAD to form NAD. Uses ammonia as a nitrogen source. In Salmonella arizonae (strain ATCC BAA-731 / CDC346-86 / RSK2980), this protein is NH(3)-dependent NAD(+) synthetase.